The chain runs to 473 residues: Aspartyl/glutamyl-tRNA(Asn/Gln) amidotransferase subunit B (473 aa).

Belongs to the GatB/GatE family. GatB subfamily. As to quaternary structure, heterotrimer of A, B and C subunits.

It catalyses the reaction L-glutamyl-tRNA(Gln) + L-glutamine + ATP + H2O = L-glutaminyl-tRNA(Gln) + L-glutamate + ADP + phosphate + H(+). The catalysed reaction is L-aspartyl-tRNA(Asn) + L-glutamine + ATP + H2O = L-asparaginyl-tRNA(Asn) + L-glutamate + ADP + phosphate + 2 H(+). Functionally, allows the formation of correctly charged Asn-tRNA(Asn) or Gln-tRNA(Gln) through the transamidation of misacylated Asp-tRNA(Asn) or Glu-tRNA(Gln) in organisms which lack either or both of asparaginyl-tRNA or glutaminyl-tRNA synthetases. The reaction takes place in the presence of glutamine and ATP through an activated phospho-Asp-tRNA(Asn) or phospho-Glu-tRNA(Gln). The protein is Aspartyl/glutamyl-tRNA(Asn/Gln) amidotransferase subunit B of Finegoldia magna (strain ATCC 29328 / DSM 20472 / WAL 2508) (Peptostreptococcus magnus).